The sequence spans 169 residues: Shikimate kinase (169 aa).

12–17 (GAGKST) contacts ATP. Ser-16 is a Mg(2+) binding site. Residues Asp-34, Arg-58, and Gly-80 each coordinate substrate. Arg-117 is an ATP binding site. Arg-136 provides a ligand contact to substrate.

It belongs to the shikimate kinase family. In terms of assembly, monomer. It depends on Mg(2+) as a cofactor.

Its subcellular location is the cytoplasm. The enzyme catalyses shikimate + ATP = 3-phosphoshikimate + ADP + H(+). It participates in metabolic intermediate biosynthesis; chorismate biosynthesis; chorismate from D-erythrose 4-phosphate and phosphoenolpyruvate: step 5/7. Catalyzes the specific phosphorylation of the 3-hydroxyl group of shikimic acid using ATP as a cosubstrate. The chain is Shikimate kinase from Rhodococcus erythropolis (strain PR4 / NBRC 100887).